Here is a 363-residue protein sequence, read N- to C-terminus: DNA replication and repair protein RecF (363 aa).

ATP is bound at residue 30 to 37 (GNNAQGKT).

The protein belongs to the RecF family.

It localises to the cytoplasm. The RecF protein is involved in DNA metabolism; it is required for DNA replication and normal SOS inducibility. RecF binds preferentially to single-stranded, linear DNA. It also seems to bind ATP. This is DNA replication and repair protein RecF from Clostridium acetobutylicum (strain ATCC 824 / DSM 792 / JCM 1419 / IAM 19013 / LMG 5710 / NBRC 13948 / NRRL B-527 / VKM B-1787 / 2291 / W).